Reading from the N-terminus, the 301-residue chain is PSVSFQLPVIDFSDQNLKPGSSKWDEVTADVLKALEDYGCFEASFDKLSVELNRSVFEAMEDLFELPIPTKQRNVSSKLFHGYLCHNLYESLGINDANVLEKVNDFTQQLWPDHGNKSISETIHLFSEQLVELDLMVRRMIMESFGIEKYIDEHLNSTYYLTRLMKYTSPPDDDDDEETKLGLRSHTDKNIITILHQYQVDGLEVKTKDDKWIKVKPSQDSVLVMVGDSLCALLNGRLHSPYHRVIMTGKKTRYSTGLFSIPKTGVIIDSPEELVDKEHPRIFKPFEYTDFLHFFQTEAGR.

Residues 158–262 (TYYLTRLMKY…RYSTGLFSIP (105 aa)) form the Fe2OG dioxygenase domain. The Fe cation site is built by histidine 186, aspartate 188, and histidine 243. Arginine 253 contributes to the 2-oxoglutarate binding site.

The protein belongs to the iron/ascorbate-dependent oxidoreductase family. It depends on Fe(2+) as a cofactor.

Probable 2-oxoglutarate-dependent dioxygenase that may be involved in glucosinolates biosynthesis. May play a role in the production of aliphatic glucosinolates. The polypeptide is Probable 2-oxoglutarate-dependent dioxygenase AOP1 (AOP1) (Arabidopsis thaliana (Mouse-ear cress)).